The following is a 322-amino-acid chain: MTQVYDITIIGGGPVGLFAAFYAHLRQAKVKIIDSLPQLGGQPAILYPEKAILDIPAFPSLTGQELTDNLLAQLAPFDTTICLNETLTAIEPGETITLTTNKGNHQTKTLIIAMGGGAFKPRPLEIDGADSFDNVHYHVSNIQQYADKDIVVLGGGDSAVDWSLAFEKIAKTTQIIHRRDNFRALEHSVEELKQSSVTIHTPFIPKGLSGENGRASAIDFDKVKSEDKLTLSFDHLFVNYGFKSSVGTLKEWGLELNRHRIVVNSKQETSVPGIYAIGDCCFYEGKIDLIATGLGEAPTAVNNAMNYLNPNEKVQPKHSTSL.

Residues Leu87, Phe119, Asp279, and Thr320 each coordinate FAD.

Belongs to the ferredoxin--NADP reductase type 2 family. As to quaternary structure, homodimer. Requires FAD as cofactor.

It carries out the reaction 2 reduced [2Fe-2S]-[ferredoxin] + NADP(+) + H(+) = 2 oxidized [2Fe-2S]-[ferredoxin] + NADPH. The protein is Ferredoxin--NADP reductase of Streptococcus suis (strain 98HAH33).